We begin with the raw amino-acid sequence, 267 residues long: Heme-containing CO-sensing transcriptional regulator RcoM 1 (267 aa).

A PAS domain is found at 15–86; the sequence is RAETFQHKLE…KSRDKLRFLL (72 aa). Residues histidine 74 and methionine 104 each contribute to the heme site. Residues 161–266 form the HTH LytTR-type domain; the sequence is IPVYRKNRVI…TAQLKELLGV (106 aa).

It depends on heme as a cofactor.

Its subcellular location is the cytoplasm. One-component, b-type heme-containing aerobic sensor and transcriptional regulator that responds to CO by activating the expression of the oxidation operon cox. The protein is Heme-containing CO-sensing transcriptional regulator RcoM 1 (rcoM1) of Paraburkholderia xenovorans (strain LB400).